We begin with the raw amino-acid sequence, 121 residues long: Mitochondrial intermembrane space cysteine motif-containing protein MIX14 (121 aa).

2 CHCH domains span residues 14–56 (VANC…VPSV) and 60–105 (MSEC…VKNK). Short sequence motifs (cx9C motif) lie at residues 17–27 (CPQEFLQYHKC), 38–48 (CKDGRMILSTC), 63–73 (CSEPMKKYDQC), and 87–97 (CLGFLQDLRKC). 4 cysteine pairs are disulfide-bonded: Cys-17–Cys-48, Cys-27–Cys-38, Cys-63–Cys-97, and Cys-73–Cys-87.

The protein resides in the mitochondrion intermembrane space. The sequence is that of Mitochondrial intermembrane space cysteine motif-containing protein MIX14 (MIX14) from Saccharomyces cerevisiae (strain ATCC 204508 / S288c) (Baker's yeast).